Here is a 298-residue protein sequence, read N- to C-terminus: N-acetylmuramic acid 6-phosphate etherase (298 aa).

One can recognise an SIS domain in the interval 57–220 (IAAAFGKGGR…STGAMIRTGK (164 aa)). Glu-85 functions as the Proton donor in the catalytic mechanism. Glu-116 is an active-site residue.

It belongs to the GCKR-like family. MurNAc-6-P etherase subfamily. In terms of assembly, homodimer.

It catalyses the reaction N-acetyl-D-muramate 6-phosphate + H2O = N-acetyl-D-glucosamine 6-phosphate + (R)-lactate. Its pathway is amino-sugar metabolism; 1,6-anhydro-N-acetylmuramate degradation. It functions in the pathway amino-sugar metabolism; N-acetylmuramate degradation. The protein operates within cell wall biogenesis; peptidoglycan recycling. Functionally, specifically catalyzes the cleavage of the D-lactyl ether substituent of MurNAc 6-phosphate, producing GlcNAc 6-phosphate and D-lactate. Together with AnmK, is also required for the utilization of anhydro-N-acetylmuramic acid (anhMurNAc) either imported from the medium or derived from its own cell wall murein, and thus plays a role in cell wall recycling. In Aeromonas hydrophila subsp. hydrophila (strain ATCC 7966 / DSM 30187 / BCRC 13018 / CCUG 14551 / JCM 1027 / KCTC 2358 / NCIMB 9240 / NCTC 8049), this protein is N-acetylmuramic acid 6-phosphate etherase.